Here is a 355-residue protein sequence, read N- to C-terminus: Fructose-1,6-bisphosphatase (355 aa).

AMP-binding positions include 25-30 (ILDQQH) and 37-41 (TGEFS). Residues Asp-78 and Glu-107 each coordinate Mg(2+). Residue 121–122 (KY) participates in AMP binding. Residues Asp-127, Ile-129, and Asp-130 each contribute to the Mg(2+) site. 130–133 (DGSS) is a substrate binding site. Lys-149 is a binding site for AMP. Residues 230-233 (NEGN), 263-268 (RYIGSM), Tyr-284, and 294-296 (KLR) contribute to the substrate site. Glu-300 serves as a coordination point for Mg(2+).

This sequence belongs to the FBPase class 1 family. In terms of assembly, homotetramer. Requires Mg(2+) as cofactor.

The enzyme catalyses beta-D-fructose 1,6-bisphosphate + H2O = beta-D-fructose 6-phosphate + phosphate. It participates in carbohydrate biosynthesis; gluconeogenesis. Its activity is regulated as follows. Subject to complex allosteric regulation. The enzyme can assume an active R-state, or an inactive T-state. Intermediate conformations may exist. AMP acts as allosteric inhibitor. AMP binding affects the turnover of bound substrate and not the affinity for substrate. The chain is Fructose-1,6-bisphosphatase (FBP1) from Kluyveromyces lactis (strain ATCC 8585 / CBS 2359 / DSM 70799 / NBRC 1267 / NRRL Y-1140 / WM37) (Yeast).